The following is a 431-amino-acid chain: Glutamate-1-semialdehyde 2,1-aminomutase (431 aa).

Lys265 carries the post-translational modification N6-(pyridoxal phosphate)lysine.

The protein belongs to the class-III pyridoxal-phosphate-dependent aminotransferase family. HemL subfamily. In terms of assembly, homodimer. Requires pyridoxal 5'-phosphate as cofactor.

The protein resides in the cytoplasm. The catalysed reaction is (S)-4-amino-5-oxopentanoate = 5-aminolevulinate. It functions in the pathway porphyrin-containing compound metabolism; protoporphyrin-IX biosynthesis; 5-aminolevulinate from L-glutamyl-tRNA(Glu): step 2/2. This is Glutamate-1-semialdehyde 2,1-aminomutase from Aliivibrio salmonicida (strain LFI1238) (Vibrio salmonicida (strain LFI1238)).